The chain runs to 256 residues: Gene 18 protein (256 aa).

This sequence belongs to the herpesviridae UL79 family.

This is Gene 18 protein (18) from Saimiriine herpesvirus 2 (strain 11) (SaHV-2).